The primary structure comprises 233 residues: Ion-translocating oxidoreductase complex subunit E (233 aa).

6 helical membrane-spanning segments follow: residues 18–38 (ALVQLLGLCPLLAVSSTATNA), 39–59 (LGLGLATTLVLVCTNTAVSAL), 69–89 (IPIYVMIIASVVSTVQMLINA), 92–112 (FGLYQSLGIFIPLIVTNCIVI), 128–148 (ALDGFAMGMGATCALFVLGAL), and 182–202 (PFLLAMLPPGAFIGLGLLLAG).

It belongs to the NqrDE/RnfAE family. The complex is composed of six subunits: RnfA, RnfB, RnfC, RnfD, RnfE and RnfG.

It is found in the cell inner membrane. Functionally, part of a membrane-bound complex that couples electron transfer with translocation of ions across the membrane. The sequence is that of Ion-translocating oxidoreductase complex subunit E from Yersinia pseudotuberculosis serotype IB (strain PB1/+).